Here is a 175-residue protein sequence, read N- to C-terminus: uncharacterized protein (175 aa).

Residues 1–33 (MERLPYEIVSTIFRKAILHYVLIRGTTYPQSLA) form the signal peptide.

This is an uncharacterized protein from Methanocaldococcus jannaschii (strain ATCC 43067 / DSM 2661 / JAL-1 / JCM 10045 / NBRC 100440) (Methanococcus jannaschii).